A 503-amino-acid polypeptide reads, in one-letter code: MVLEVLNPRHYNITSMVTEVAPVASIAILLLTGFLLLVWNYEDTSSIPGPGYFLGIGPLISHCRFLWMGIGSTCNYYNKTYGEFVRVWICGEETLIISKSSSMFHIMKHSHYTSRFGSKLGLQCIGMHEKGIIFNNNPALWKAVRPFFTKALSGPGLVRMVTVCADSITKHLDRLEEVRNELGYVDVLTLMRRIMLDTSNKLFLGIPLDERAIVVKIQGYFDAWQALLLKPDIFFKISWLCRKYEKSVKDLKDAMEILIEEKRQRISTAEKLEDCMDFATELIFAEKRGDLTKENVDQCILEMLIAAPDTMSVSVFFMLFLIAKHPQVEEAIMKEIQTVVGERDIRIDDMQKLKVVENFIYESMRYQPVVDLVMRKALEDDVIDGYPVKKGTNIILNIGRMHRLEFFPKPNEFTLENFARNVPYRYFQPFGFGPRACAGKYIAMVMMKVTLVTLLRSFHVQTLQGRCIEKMQKKNDLSLHPDETSDLLGMIFIPRNSDKCLDH.

3 consecutive transmembrane segments (helical) span residues 19–39 (EVAP…LLVW), 51–71 (GYFL…MGIG), and 303–323 (MLIA…FLIA). 2 residues coordinate substrate: D309 and M374. Residue C437 coordinates heme.

This sequence belongs to the cytochrome P450 family. Requires heme as cofactor.

It is found in the endoplasmic reticulum membrane. Its subcellular location is the microsome membrane. It carries out the reaction testosterone + 3 reduced [NADPH--hemoprotein reductase] + 3 O2 = 17beta-estradiol + formate + 3 oxidized [NADPH--hemoprotein reductase] + 4 H2O + 4 H(+). It catalyses the reaction androst-4-ene-3,17-dione + 3 reduced [NADPH--hemoprotein reductase] + 3 O2 = estrone + formate + 3 oxidized [NADPH--hemoprotein reductase] + 4 H2O + 4 H(+). The enzyme catalyses androst-4-ene-3,17-dione + reduced [NADPH--hemoprotein reductase] + O2 = 19-hydroxyandrost-4-ene-3,17-dione + oxidized [NADPH--hemoprotein reductase] + H2O + H(+). The catalysed reaction is 19-hydroxyandrost-4-ene-3,17-dione + reduced [NADPH--hemoprotein reductase] + O2 = 19-oxo-androst-4-ene-3,17-dione + oxidized [NADPH--hemoprotein reductase] + 2 H2O + H(+). It carries out the reaction 19-oxo-androst-4-ene-3,17-dione + reduced [NADPH--hemoprotein reductase] + O2 = estrone + formate + oxidized [NADPH--hemoprotein reductase] + H2O + 2 H(+). It catalyses the reaction estrone + reduced [NADPH--hemoprotein reductase] + O2 = 2-hydroxyestrone + oxidized [NADPH--hemoprotein reductase] + H2O + H(+). The enzyme catalyses 17beta-hydroxy-5alpha-androstan-3-one + reduced [NADPH--hemoprotein reductase] + O2 = 17beta,19-dihydroxy-3-oxo-5alpha-androstanone + oxidized [NADPH--hemoprotein reductase] + H2O + H(+). The catalysed reaction is 17beta,19-dihydroxy-3-oxo-5alpha-androstanone + reduced [NADPH--hemoprotein reductase] + O2 = 17beta-hydroxy-3,19-dioxo-5alpha-androstanone + oxidized [NADPH--hemoprotein reductase] + 2 H2O + H(+). It carries out the reaction 17beta-hydroxy-3,19-dioxo-5alpha-androstanone + reduced [NADPH--hemoprotein reductase] + O2 = 17beta-hydroxy-3-oxo-19-nor-5alpha-androst-1-ene + formate + oxidized [NADPH--hemoprotein reductase] + H2O + 2 H(+). It functions in the pathway steroid hormone biosynthesis. Its function is as follows. A cytochrome P450 monooxygenase that catalyzes the conversion of C19 androgens, androst-4-ene-3,17-dione (androstenedione) and testosterone to the C18 estrogens, estrone and estradiol, respectively. Catalyzes three successive oxidations of C19 androgens: two conventional oxidations at C19 yielding 19-hydroxy and 19-oxo/19-aldehyde derivatives, followed by a third oxidative aromatization step that involves C1-beta hydrogen abstraction combined with cleavage of the C10-C19 bond to yield a phenolic A ring and formic acid. Alternatively, the third oxidative reaction yields a 19-norsteroid and formic acid. Converts dihydrotestosterone to delta1,10-dehydro 19-nordihydrotestosterone and may play a role in homeostasis of this potent androgen. Also displays 2-hydroxylase activity toward estrone. Mechanistically, uses molecular oxygen inserting one oxygen atom into a substrate, and reducing the second into a water molecule, with two electrons provided by NADPH via cytochrome P450 reductase (CPR; NADPH-ferrihemoprotein reductase). The protein is Aromatase (CYP19A1) of Leucopleurus acutus (Atlantic white-sided dolphin).